The chain runs to 519 residues: Cytosol aminopeptidase (519 aa).

Ser42 is subject to Phosphoserine. An N6-succinyllysine modification is found at Lys45. Residue Ser54 is modified to Phosphoserine. Residues Lys61 and Lys103 each carry the N6-succinyllysine modification. Phosphoserine occurs at positions 180 and 194. Residues Leu202, Met203, and Thr205 each contribute to the Zn(2+) site. Residue Ser238 is modified to Phosphoserine. Zn(2+)-binding residues include Lys282 and Asp287. 4 residues coordinate substrate: Lys282, Asp287, Ser292, and Lys294. Asp287 is a binding site for Mg(2+). The active site involves Lys294. Zn(2+)-binding residues include Arg303, Asp305, Asp364, and Glu366. 2 residues coordinate substrate: Asp305 and Asp364. Residues Asp364 and Glu366 each contribute to the Mg(2+) site. Arg368 is a catalytic residue. N6-acetyllysine; alternate is present on Lys455. Lys455 is subject to N6-succinyllysine; alternate. Lys476 is modified (N6-succinyllysine). Lys489 carries the post-translational modification N6-acetyllysine; alternate. Lys489 carries the N6-succinyllysine; alternate modification.

Belongs to the peptidase M17 family. Homohexamer. It depends on Zn(2+) as a cofactor. Mn(2+) is required as a cofactor.

It is found in the cytoplasm. It carries out the reaction Release of an N-terminal amino acid, Xaa-|-Yaa-, in which Xaa is preferably Leu, but may be other amino acids including Pro although not Arg or Lys, and Yaa may be Pro. Amino acid amides and methyl esters are also readily hydrolyzed, but rates on arylamides are exceedingly low.. The enzyme catalyses an S-substituted L-cysteinylglycine + H2O = an S-substituted L-cysteine + glycine. The catalysed reaction is L-cysteinylglycine + H2O = L-cysteine + glycine. It catalyses the reaction S-benzyl-L-cysteinylglycine + H2O = S-benzyl-L-cysteine + glycine. It carries out the reaction Release of N-terminal proline from a peptide.. Its activity is regulated as follows. Zofenoprilat inhibits Cys-Gly hydrolysis activity. In terms of biological role, cytosolic metallopeptidase that catalyzes the removal of unsubstituted N-terminal hydrophobic amino acids from various peptides. The presence of Zn(2+) ions is essential for the peptidase activity, and the association with other cofactors can modulate the substrate spectificity of the enzyme. For instance, in the presence of Mn(2+), it displays a specific Cys-Gly hydrolyzing activity of Cys-Gly-S-conjugates. Involved in the metabolism of glutathione and in the degradation of glutathione S-conjugates, which may play a role in the control of the cell redox status. This is Cytosol aminopeptidase from Bos taurus (Bovine).